A 382-amino-acid polypeptide reads, in one-letter code: MTEQRPLTIALVAGETSGDILGAGLIRALKERVPNARFVGVAGPRMQAEGCEAWYEMEELAVMGIVEVLGRLRRLLHIRADLTKRFGELKPDVFVGIDAPDFNITLEGNLKKQGIKTIHYVSPSVWAWRQKRVFKIGRATDLVLAFLPFEKAFYDKYNVPCRFIGHTMADAMPLDPDKNGARDVLGIPHDAHCLALLPGSRGAEVEMLSADFLKTAQLLRQTYPDLEIVVPLVNAKRREQFERIKAEVAPDLAVHLLDGMGREAMVASDAALLASGTAALECMLAKCPMVVGYRMKPFTFWLAKRLVKTEYVSLPNLLAGRELVKELLQEECEPQKLAAALLPLLANGKTSHAMHDTFRELHQQIRCNADEQAAQAVLELAQ.

Belongs to the LpxB family.

The enzyme catalyses 2-N,3-O-bis[(3R)-3-hydroxytetradecanoyl]-alpha-D-glucosaminyl 1-phosphate + UDP-2-N,3-O-bis[(3R)-3-hydroxytetradecanoyl]-alpha-D-glucosamine = lipid A disaccharide (E. coli) + UDP + H(+). It catalyses the reaction a lipid X + a UDP-2-N,3-O-bis[(3R)-3-hydroxyacyl]-alpha-D-glucosamine = a lipid A disaccharide + UDP + H(+). The protein operates within glycolipid biosynthesis; lipid IV(A) biosynthesis; lipid IV(A) from (3R)-3-hydroxytetradecanoyl-[acyl-carrier-protein] and UDP-N-acetyl-alpha-D-glucosamine: step 5/6. Its function is as follows. Condensation of UDP-2,3-diacylglucosamine and 2,3-diacylglucosamine-1-phosphate to form lipid A disaccharide, a precursor of lipid A, a phosphorylated glycolipid that anchors the lipopolysaccharide to the outer membrane of the cell. The polypeptide is Lipid-A-disaccharide synthase (Escherichia coli O7:K1 (strain IAI39 / ExPEC)).